The primary structure comprises 283 residues: Acetylglutamate kinase (283 aa).

Substrate is bound by residues 64–65 (GG), Arg-86, and Asn-181.

Belongs to the acetylglutamate kinase family. ArgB subfamily.

Its subcellular location is the cytoplasm. It carries out the reaction N-acetyl-L-glutamate + ATP = N-acetyl-L-glutamyl 5-phosphate + ADP. It functions in the pathway amino-acid biosynthesis; L-arginine biosynthesis; N(2)-acetyl-L-ornithine from L-glutamate: step 2/4. Its function is as follows. Catalyzes the ATP-dependent phosphorylation of N-acetyl-L-glutamate. The polypeptide is Acetylglutamate kinase (Sulfurimonas denitrificans (strain ATCC 33889 / DSM 1251) (Thiomicrospira denitrificans (strain ATCC 33889 / DSM 1251))).